The primary structure comprises 163 residues: Nucleotide-binding protein BLi01194 (163 aa).

This sequence belongs to the YajQ family.

Its function is as follows. Nucleotide-binding protein. This Bacillus licheniformis (strain ATCC 14580 / DSM 13 / JCM 2505 / CCUG 7422 / NBRC 12200 / NCIMB 9375 / NCTC 10341 / NRRL NRS-1264 / Gibson 46) protein is Nucleotide-binding protein BLi01194.